Here is a 450-residue protein sequence, read N- to C-terminus: Vimentin beta (450 aa).

Residues 1–81 are head; that stretch reads MSSRTSTSSY…FGLADAINTE (81 aa). Over residues 24-38 the composition is skewed to polar residues; that stretch reads STYSSRQYSSPGRTT. The disordered stretch occupies residues 24 to 56; the sequence is STYSSRQYSSPGRTTSRVSYSSASSTSPSLYMS. Low complexity predominate over residues 39–56; sequence SRVSYSSASSTSPSLYMS. The tract at residues 82–117 is coil 1A; that stretch reads FKANRTNEKAEMQHVNDRFASYIEEVRFLEQQNKIL. Residues 89-397 form the IF rod domain; the sequence is EKAEMQHVND…NLLEGEEYRI (309 aa). The interval 118–139 is linker 1; the sequence is TAELEQMRGKGSSRVGDLYEDE. Positions 140–231 are coil 1B; it reads MRELRRQVDQ…KLHDEELAEL (92 aa). A linker 12 region spans residues 232–254; sequence QMQIQERHVQIDMEVAKPDLTAA. Residues 255–393 form a coil 2 region; sequence LRDVRQQYET…ATYRNLLEGE (139 aa). The segment at 394–450 is tail; it reads EYRITTPFPNLSSLSLRESMKEIRPAMDSLSKKVVIKTIETRDGHIINQSTQKDNLE.

This sequence belongs to the intermediate filament family. Homomer. One of the most prominent phosphoproteins in various cells of mesenchymal origin. Phosphorylation is enhanced during cell division, at which time vimentin filaments are significantly reorganized. In terms of tissue distribution, expressed in low amounts in retina, optic nerve, brain, and spinal cord and in very high amounts in eye lens.

Vimentins are class-III intermediate filaments found in various non-epithelial cells, especially mesenchymal cells. Vimentin is attached to the nucleus, endoplasmic reticulum, and mitochondria, either laterally or terminally. This chain is Vimentin beta, found in Carassius auratus (Goldfish).